We begin with the raw amino-acid sequence, 953 residues long: MCNPEEAALLRLEEVFSATLAHVNSLVLQPLLPAAPDPSDPWGRECLRLLQQLHKSSQQLWEVTEESLHSLQERLRYPDSTGLESLLLLRGADRVLQAHIEYIESYTSCMVVQAFQKAAKRRSEYWRGQRKALRQLLSGVSSEGSVGASLGQALHQPLAHHVQQYVLLLLSLGDTIGEHHPTRELVVNAVTLFGNLQSFMKQELDQAVATQALWHTLRGRLRDVLCTPAHRLLQDSQDVPVTVAPLRAERVLLFDDALVLLQGHNVHTFDLKLVWVDPGQDGCTFHLLTPEEEFSFCAKDSQGQAVWQWKVTWAVHQALHGKKDFPVLGAGLEPSQPPDCRCAEYTFQAEGRLCQATYEGEWCRGRPHGKGTLKWPDGRNHVGNFCQGLEHGFGIRLLPQASEDKFDCYKCHWREGSMCGYGICEYSTDEVYKGYFQEGLRHGFGVLESGPQAPQPFRYTGHWERGQRSGYGIEEDGDRGERYIGMWQAGQRHGPGVMVTQAGVCYQGTFQADKTVGPGILLSEDDSLYEGTFTRDLTLMGKGKVTFPNGFTLEGSFGSGAGRGLHTQGVLDTAALPPDPSSTCKRQLGVGAFPVESRWQGVYSPFRDFVCAGCPRDLQEALLGFDVQSSRELRRSQDYLSCERTHPEDSVGSMEDILEELLQHREPKALQLYLRKALSNSLHPLGKLLRTLMLTFQATYAGVGANKHLQELAQEEVKQHAQELWAAYRGLLRVALERKGQALEEDEDTETRDLQVHGLVLPLMLPSFYSELFTLYLLLHEREDSFYSQGIANLSLFPDTQLLEFLDVQKHLWPLKDLTLTSNQRYSLVRDKCFLSATECLQKIMTTVDPREKLEVLERTYGEIEGTVSRVLGREYKLPMDDLLPLLIYVVSRARIQHLGAEIHLIRDMMDPNHTGGLYDFLLTALESCYEHIQKEDMRLHRLPGHWHSRELW.

MORN repeat units follow at residues 358-380 (YEGEWCRGRPHGKGTLKWPDGRN), 381-403 (HVGNFCQGLEHGFGIRLLPQASE), 409-431 (YKCHWREGSMCGYGICEYSTDEV), 432-452 (YKGYFQEGLRHGFGVLESGPQ), 459-479 (YTGHWERGQRSGYGIEEDGDR), 483-505 (YIGMWQAGQRHGPGVMVTQAGVC), 506-528 (YQGTFQADKTVGPGILLSEDDSL), and 529-552 (YEGTFTRDLTLMGKGKVTFPNGFT). Positions 796–942 (LFPDTQLLEF…IQKEDMRLHR (147 aa)) constitute a VPS9 domain.

Homodimer. Forms a heteromeric complex with ALS2. Interacts with ALS2 and RAB5A. Expressed in heart and kidney.

It is found in the cytoplasm. Its function is as follows. Acts as a guanine nucleotide exchange factor (GEF) for Rab5 GTPase. Regulates the ALS2-mediated endosome dynamics. This is ALS2 C-terminal-like protein (ALS2CL) from Homo sapiens (Human).